A 137-amino-acid polypeptide reads, in one-letter code: uncharacterized protein (137 aa).

This is an uncharacterized protein from Bacillus subtilis (strain 168).